A 302-amino-acid chain; its full sequence is Recombination-associated protein RdgC (302 aa).

It belongs to the RdgC family.

The protein localises to the cytoplasm. It localises to the nucleoid. Its function is as follows. May be involved in recombination. In Actinobacillus pleuropneumoniae serotype 5b (strain L20), this protein is Recombination-associated protein RdgC.